The following is a 46-amino-acid chain: Photosystem II reaction center protein K (46 aa).

A propeptide spanning residues 1–9 (MTTLALVLA) is cleaved from the precursor. The helical transmembrane segment at 18–38 (FAPIVDVLPVIPVFFILLAFV) threads the bilayer.

The protein belongs to the PsbK family. In terms of assembly, PSII is composed of 1 copy each of membrane proteins PsbA, PsbB, PsbC, PsbD, PsbE, PsbF, PsbH, PsbI, PsbJ, PsbK, PsbL, PsbM, PsbT, PsbX, PsbY, PsbZ, Psb30/Ycf12, at least 3 peripheral proteins of the oxygen-evolving complex and a large number of cofactors. It forms dimeric complexes. This protein is tightly associated with CP43 (psbC), one of the core proteins.

Its subcellular location is the plastid. It is found in the chloroplast thylakoid membrane. In terms of biological role, one of the components of the core complex of photosystem II (PSII). PSII is a light-driven water:plastoquinone oxidoreductase that uses light energy to abstract electrons from H(2)O, generating O(2) and a proton gradient subsequently used for ATP formation. It consists of a core antenna complex that captures photons, and an electron transfer chain that converts photonic excitation into a charge separation. Required for assembly and/or stability of PSII. This Chlamydomonas reinhardtii (Chlamydomonas smithii) protein is Photosystem II reaction center protein K.